Reading from the N-terminus, the 553-residue chain is Tether containing UBX domain for GLUT4 (553 aa).

Ala-2 bears the N-acetylalanine mark. Over residues 182–202 (PGSLGSSASAGQAAASAPLPL) the composition is skewed to low complexity. The segment at 182–324 (PGSLGSSASA…REPVDREPVV (143 aa)) is disordered. A Phosphoserine modification is found at Ser-184. The segment covering 206-217 (ELSRGDLSRPED) has biased composition (basic and acidic residues). The segment covering 260 to 280 (RPLTSSSAKLPKSLSSPGGPS) has biased composition (low complexity). Phosphoserine is present on Ser-275. Basic and acidic residues predominate over residues 296-324 (EQERERDPQQEQERERPVDREPVDREPVV). The segment at 317–380 (PVDREPVVCH…LVTKAFREAQ (64 aa)) is interaction with GLUT4. The 77-residue stretch at 386–462 (ERYPKVALRV…NLFPAALVHL (77 aa)) folds into the UBX domain. Residues 499–536 (GSPSPLPAPDPAPKSEPAAEEGALVPPEPIPGTAQPVK) form a disordered region. Ser-500 and Ser-502 each carry phosphoserine. Residues 502-512 (SPLPAPDPAPK) are compositionally biased toward pro residues.

Interacts with GLUT4. Interacts with VCPKMT. Interacts with VCP. As to expression, ubiquitous. Highly expressed in testis, heart, skeletal muscle and pancreas.

The protein resides in the endomembrane system. It is found in the endoplasmic reticulum-Golgi intermediate compartment membrane. It localises to the cytoplasm. The protein localises to the nucleus. In terms of biological role, tethering protein that sequesters GLUT4-containing vesicles in the cytoplasm in the absence of insulin. Modulates the amount of GLUT4 that is available at the cell surface. Enhances VCP methylation catalyzed by VCPKMT. This Homo sapiens (Human) protein is Tether containing UBX domain for GLUT4 (ASPSCR1).